The following is a 180-amino-acid chain: Large ribosomal subunit protein uL5 (180 aa).

Belongs to the universal ribosomal protein uL5 family. In terms of assembly, part of the 50S ribosomal subunit; part of the 5S rRNA/L5/L18/L25 subcomplex. Contacts the 5S rRNA and the P site tRNA. Forms a bridge to the 30S subunit in the 70S ribosome.

Functionally, this is one of the proteins that bind and probably mediate the attachment of the 5S RNA into the large ribosomal subunit, where it forms part of the central protuberance. In the 70S ribosome it contacts protein S13 of the 30S subunit (bridge B1b), connecting the 2 subunits; this bridge is implicated in subunit movement. Contacts the P site tRNA; the 5S rRNA and some of its associated proteins might help stabilize positioning of ribosome-bound tRNAs. This chain is Large ribosomal subunit protein uL5, found in Symbiobacterium thermophilum (strain DSM 24528 / JCM 14929 / IAM 14863 / T).